We begin with the raw amino-acid sequence, 514 residues long: Exoglucanase 1 (514 aa).

The first 17 residues, 1 to 17, serve as a signal peptide directing secretion; the sequence is MYRKLAVISAFLATARA. Position 18 is a pyrrolidone carboxylic acid (Q18). Residues 18 to 453 form a catalytic region; that stretch reads QSACTLQSET…GSTGNPSGGN (436 aa). 10 disulfide bridges follow: C21/C89, C36/C42, C67/C88, C78/C84, C155/C414, C189/C227, C193/C226, C247/C273, C255/C260, and C278/C348. N62 carries N-linked (GlcNAc) asparagine glycosylation. The active-site Nucleophile is E229. Residue E234 is the Proton donor/acceptor of the active site. N-linked (GlcNAc...) (high mannose) asparagine glycosylation is present at N287. Residue N401 is glycosylated (N-linked (GlcNAc) asparagine). The span at 401 to 437 shows a compositional bias: polar residues; the sequence is NETSSTPGAVRGSCSTSSGVPAQVESQSPNAKVTFSN. Positions 401–481 are disordered; that stretch reads NETSSTPGAV…TGSSPGPTQS (81 aa). Residues 454–478 are linker; the sequence is PPGGNPPGTTTTRRPATTTGSSPGP. Residues 460–479 show a composition bias toward low complexity; that stretch reads PGTTTTRRPATTTGSSPGPT. T462 carries O-linked (Man) threonine glycosylation. 3 O-linked (Man...) threonine glycosylation sites follow: T463, T464, and T465. T470 carries an O-linked (Man) threonine glycan. 2 O-linked (Man...) threonine glycosylation sites follow: T471 and T472. O-linked (Man) serine glycosylation is found at S474 and S475. One can recognise a CBM1 domain in the interval 478 to 514; it reads PTQSHYGQCGGIGYSGPTVCASGTTCQVLNPYYSQCL. T479 is a glycosylation site (O-linked (Man) threonine). O-linked (Man) serine glycans are attached at residues S481 and S492. Cystine bridges form between C486-C503 and C497-C513.

Belongs to the glycosyl hydrolase 7 (cellulase C) family. Post-translationally, N-glycosylated. A high mannose glycan is attached to Asn-287 (predominantly Man(8)GlcNAc(2)) and single GlcNAc occupancy is observed at Asn-62 and Asn-401 with some site heterogeneity depending on strains and fermentation conditions. In terms of processing, O-glycosylated. Within the linker domain, all 8 threonines are variably glycosylated with between at least one, and up to three, mannose residues per site. All serines in this domain are at least partially glycosylated with a single mannose residue. O-glycosylation of the cellulase linker provides protection from proteolysis. Linker glycans also contribute to binding affinity of cellobiohydrolases to cellulose.

The protein resides in the secreted. It catalyses the reaction Hydrolysis of (1-&gt;4)-beta-D-glucosidic linkages in cellulose and cellotetraose, releasing cellobiose from the non-reducing ends of the chains.. In terms of biological role, exocellobiohydrolases (CBH) that catalyzes the hydrolysis of 1,4-beta-D-glucosidic bonds in cellulose to release the disaccharide cellobiose. The degradation of cellulose involves an interplay between different cellulolytic enzymes. Hydrolysis starts with endoglucanases (EGs), which cut internal beta-1,4-glucosidic bonds in cellulose to reduce the polymerization degree of the substrate and create new chain ends for exocellobiohydrolases (CBHs). The CBHs release the disaccharide cellobiose from the non-reducing end of the cellulose polymer chain. Finally, beta-1,4-glucosidases hydrolyze the cellobiose and other short cello-oligosaccharides into glucose units. This Hypocrea jecorina (strain ATCC 56765 / BCRC 32924 / NRRL 11460 / Rut C-30) (Trichoderma reesei) protein is Exoglucanase 1 (cbh1).